Consider the following 1734-residue polypeptide: Protein TIC 214 (1734 aa).

6 helical membrane-spanning segments follow: residues 19 to 39, 68 to 88, 91 to 111, 133 to 153, 176 to 196, and 227 to 247; these read IINS…FSIG, FIAG…HLAL, PHTI…WNNH, VFLN…SSML, VGWL…LVWI, and IFSI…PSPI. Positions 1433–1485 form a coiled coil; that stretch reads NLNNEEKELADEVELESDNEKQINPESALSNQEKTIQEIYAESKKKKRQNKKQ.

Belongs to the TIC214 family. As to quaternary structure, part of the Tic complex.

It is found in the plastid. The protein resides in the chloroplast inner membrane. In terms of biological role, involved in protein precursor import into chloroplasts. May be part of an intermediate translocation complex acting as a protein-conducting channel at the inner envelope. The sequence is that of Protein TIC 214 from Lepidium virginicum (Virginia pepperweed).